Here is a 136-residue protein sequence, read N- to C-terminus: Ribonuclease VapC47 (136 aa).

The PINc domain maps to 2 to 104; sequence IYMDTSALTK…AIHLAAAAQI (103 aa). Residues Asp-5 and Asp-94 each coordinate Mg(2+).

The protein belongs to the PINc/VapC protein family. Mg(2+) is required as a cofactor.

Its function is as follows. Toxic component of a type II toxin-antitoxin (TA) system. An RNase. Its toxic effect on colony formation is neutralized by coexpression with cognate antitoxin VapB47. This is Ribonuclease VapC47 from Mycobacterium tuberculosis (strain CDC 1551 / Oshkosh).